Reading from the N-terminus, the 461-residue chain is Divalent metal cation transporter MntH (461 aa).

The next 11 membrane-spanning stretches (helical) occupy residues 56-76, 89-109, 132-152, 160-180, 193-213, 230-250, 285-305, 322-342, 378-398, 399-419, and 433-453; these read AMAF…PGNW, TLLA…SLCA, AMVL…AEVI, LIFG…VFLI, ALVI…LALA, IVTN…TVMP, IALM…AATF, LLAP…ALLC, AIAI…GTGQ, LLIL…FPLV, and SPLW…ALNV.

It belongs to the NRAMP family.

Its subcellular location is the cell inner membrane. Its function is as follows. H(+)-stimulated, divalent metal cation uptake system. The chain is Divalent metal cation transporter MntH from Agrobacterium fabrum (strain C58 / ATCC 33970) (Agrobacterium tumefaciens (strain C58)).